The following is a 100-amino-acid chain: MNLTPREKDKLLISLAAIVARNRLERGVRLNHPEAVALISDFVVEGAREGRSVADLMQAGAHVIRAEQCMEGVPEMLHSVQVEATFPDGTKLVTVHHPIR.

This sequence belongs to the urease gamma subunit family. In terms of assembly, heterotrimer of UreA (gamma), UreB (beta) and UreC (alpha) subunits. Three heterotrimers associate to form the active enzyme.

It localises to the cytoplasm. It catalyses the reaction urea + 2 H2O + H(+) = hydrogencarbonate + 2 NH4(+). Its pathway is nitrogen metabolism; urea degradation; CO(2) and NH(3) from urea (urease route): step 1/1. This is Urease subunit gamma from Cereibacter sphaeroides (strain ATCC 17025 / ATH 2.4.3) (Rhodobacter sphaeroides).